The following is a 134-amino-acid chain: Global transcriptional regulator Spx (134 aa).

Residues C10 and C13 are joined by a disulfide bond.

It belongs to the ArsC family. Spx subfamily. As to quaternary structure, interacts with the C-terminal domain of the alpha subunit of the RNAP.

It is found in the cytoplasm. Functionally, global transcriptional regulator that plays a key role in stress response and exerts either positive or negative regulation of genes. Acts by interacting with the C-terminal domain of the alpha subunit of the RNA polymerase (RNAP). This interaction can enhance binding of RNAP to the promoter region of target genes and stimulate their transcription, or block interaction of RNAP with activator. This chain is Global transcriptional regulator Spx, found in Streptococcus pyogenes serotype M3 (strain ATCC BAA-595 / MGAS315).